Here is a 273-residue protein sequence, read N- to C-terminus: Large ribosomal subunit protein uL2 (273 aa).

Disordered stretches follow at residues 35-54 (DSKS…TRHI) and 222-273 (GMAM…RRNK). Over residues 39 to 49 (KSGGRNNNGRI) the composition is skewed to polar residues. Positions 229–239 (DHPHGGGEGRN) are enriched in basic and acidic residues. The span at 253-273 (KGFKTRKNKRTDKYIVRRRNK) shows a compositional bias: basic residues.

Belongs to the universal ribosomal protein uL2 family. Part of the 50S ribosomal subunit. Forms a bridge to the 30S subunit in the 70S ribosome.

Its function is as follows. One of the primary rRNA binding proteins. Required for association of the 30S and 50S subunits to form the 70S ribosome, for tRNA binding and peptide bond formation. It has been suggested to have peptidyltransferase activity; this is somewhat controversial. Makes several contacts with the 16S rRNA in the 70S ribosome. The sequence is that of Large ribosomal subunit protein uL2 from Aeromonas salmonicida (strain A449).